The following is a 433-amino-acid chain: ATP-dependent protease ATPase subunit HslU (433 aa).

ATP contacts are provided by residues Val-18, 60–65, Asp-246, Glu-311, and Arg-383; that span reads GVGKTE.

The protein belongs to the ClpX chaperone family. HslU subfamily. As to quaternary structure, a double ring-shaped homohexamer of HslV is capped on each side by a ring-shaped HslU homohexamer. The assembly of the HslU/HslV complex is dependent on binding of ATP.

The protein resides in the cytoplasm. Functionally, ATPase subunit of a proteasome-like degradation complex; this subunit has chaperone activity. The binding of ATP and its subsequent hydrolysis by HslU are essential for unfolding of protein substrates subsequently hydrolyzed by HslV. HslU recognizes the N-terminal part of its protein substrates and unfolds these before they are guided to HslV for hydrolysis. In Rhodopseudomonas palustris (strain TIE-1), this protein is ATP-dependent protease ATPase subunit HslU.